The sequence spans 191 residues: Rho-related GTP-binding protein RhoG (191 aa).

10–17 (GDGAVGKT) is a binding site for GTP. The short motif at 32-40 (YIPTVFDNY) is the Effector region element. GTP is bound by residues 57–61 (DTAGQ) and 115–118 (TKKD). Residues threonine 138 and threonine 180 each carry the phosphothreonine modification. Cysteine 188 is modified (cysteine methyl ester). Cysteine 188 is lipidated: S-geranylgeranyl cysteine. The propeptide at 189–191 (ILL) is removed in mature form.

Belongs to the small GTPase superfamily. Rho family. As to quaternary structure, interacts with ARHGEF26. Interacts with ARHGEF16. Interacts with UNC13D; the interaction increases RhoG affinity to the membrane lipids, targets UNC13D to membrane lipids and facilitates cytotoxic granule (CG) docking to the plasma membrane.

The protein resides in the cell membrane. Functionally, plays a role in immunological synaptic F-actin density and architecture organization. Regulates actin reorganization in lymphocytes, possibly through the modulation of Rac1 activity. Required for the formation of membrane ruffles during macropinocytosis. Plays a role in cell migration and is required for the formation of cup-like structures during trans-endothelial migration of leukocytes. Binds phospholipids in an activation-dependent manner; thereby acting as an anchor for other proteins to the plasma membrane (PM). Plays a role in exocytosis of cytotoxic granules (CG) by lymphocytes/Component of the exocytosis machinery in natural killer (NK) and CD8+ T cells. Promotes the docking of cytotoxic granules (CG) to the plasma membrane through the interaction with UNC13D. Involved in the cytotoxic activity of lymphocytes/primary CD8+ T cells. This Cricetus cricetus (Black-bellied hamster) protein is Rho-related GTP-binding protein RhoG (RHOG).